The primary structure comprises 476 residues: PRAME family member 6 (476 aa).

The stretch at 97 to 124 is one LRR 1; degenerate repeat; sequence RWKLQVLDLQDVCENFWMVWSEAMARGC. The stretch at 179 to 203 is one LRR 2; degenerate repeat; the sequence is HLCCKKLKILGMPFRNIRSILKMVN. Residues 204 to 230 form an LRR 3; degenerate repeat; sequence LDCIQEVEVNCKWVLPILTQFTPYLGH. The stretch at 231 to 266 is one LRR 4; degenerate repeat; that stretch reads MRNLQKLVLSHMDVSRYVSPEQKKEIVTQFTTQFLK. LRR repeat units follow at residues 267 to 292, 293 to 324, 325 to 345, 349 to 376, and 377 to 401; these read LCCL…LSCL, KTSL…SQLK, TLDL…QILL, AATL…ALSR, and CFEL…LLSH.

The protein belongs to the PRAME family. Component of a CRL2 E3 ubiquitin-protein ligase complex, also named ECS (Elongin BC-CUL2/5-SOCS-box protein) complex, composed of CUL2, Elongin BC (ELOB and ELOC), RBX1 and substrate-specific adapter PRAMEF6.

The protein operates within protein modification; protein ubiquitination. Functionally, substrate-recognition component of a Cul2-RING (CRL2) E3 ubiquitin-protein ligase complex, which mediates ubiquitination of target proteins, leading to their degradation. The CRL2(PRAMEF6) complex mediates ubiquitination and degradation of truncated MSRB1/SEPX1 selenoproteins produced by failed UGA/Sec decoding. This Homo sapiens (Human) protein is PRAME family member 6.